A 778-amino-acid chain; its full sequence is Transcription factor kayak (778 aa).

2 stretches are compositionally biased toward low complexity: residues 24–54 (AQQL…HTQQ) and 77–98 (QYYQ…QRQL). Disordered regions lie at residues 24-57 (AQQL…QNGL), 76-130 (NQYY…HQLR), 183-223 (QPTA…TTNG), 294-320 (APLV…VLAS), 356-414 (ASVM…GTGG), and 427-478 (RNTN…RKRR). Polar residues predominate over residues 99-108 (PTQQPAASYE). Composition is skewed to low complexity over residues 109–130 (QQQQ…HQLR) and 183–222 (QPTA…TTTN). Residues 382–402 (ISDTSSGATDSTSYQNGHMMG) are compositionally biased toward low complexity. The segment covering 403–414 (NSGGGNGGGTGG) has biased composition (gly residues). Polar residues predominate over residues 427-436 (RNTNTSNSAT). The region spanning 457–520 (EEKRRIRRER…NQLEYFLQAH (64 aa)) is the bZIP domain. Residues 459-478 (KRRIRRERNKQAAARCRKRR) are basic motif. The leucine-zipper stretch occupies residues 485–513 (LTEEVELLEKRGENLKKEMELLNETKNQL). Over residues 550-571 (GSCGSGSSHHNNNSNSNDSSSG) the composition is skewed to low complexity. Disordered stretches follow at residues 550–594 (GSCG…DLKP) and 756–778 (TSQN…LVSL). Residues 579-589 (TLNSTGRSNSP) show a composition bias toward polar residues. Ser-588 is subject to Phosphoserine.

It belongs to the bZIP family. Fos subfamily. In terms of assembly, homodimer. Heterodimer with Jra. The kay-Jra heterodimer binds more stably to the AP-1 site than either of the two proteins alone.

The protein localises to the nucleus. Its function is as follows. Developmentally regulated transcription factor AP-1 binds and recognizes the enhancer DNA sequence: 5'-TGA[CG]TCA-3'. May play a role in the function or determination of a particular subset of cells in the developing embryo. It is able to carry out its function either independently of or in conjunction with Jra. In Drosophila pseudoobscura pseudoobscura (Fruit fly), this protein is Transcription factor kayak.